The chain runs to 506 residues: Trans-cinnamate 4-monooxygenase (506 aa).

A helical transmembrane segment spans residues 3-23 (LLLLEKTLLALFIAATIAVTI). Residues 213–218 (RSRLAQ) and alanine 307 each bind (E)-cinnamate. Position 448 (cysteine 448) interacts with heme.

It belongs to the cytochrome P450 family. Requires heme as cofactor.

Its subcellular location is the membrane. It catalyses the reaction (E)-cinnamate + reduced [NADPH--hemoprotein reductase] + O2 = (E)-4-coumarate + oxidized [NADPH--hemoprotein reductase] + H2O + H(+). Its pathway is phenylpropanoid metabolism; trans-4-coumarate biosynthesis; trans-4-coumarate from trans-cinnamate: step 1/1. In terms of biological role, catalyzes the first oxidative step of the phenylpropanoid pathway in higher plants by transforming trans-cinnamate into p-coumarate. The compounds formed by this pathway are essential components for lignification, pollination, and defense against ultraviolet light, predators and pathogens. The sequence is that of Trans-cinnamate 4-monooxygenase (CYP73A3) from Medicago sativa (Alfalfa).